Consider the following 1378-residue polypeptide: Protein CLASP-1 (1378 aa).

One copy of the HEAT 1 repeat lies at 168–206 (LIPQLCRLTNDPNSEVRDVSTQCLIDLMVYGGKPIVAKI). Disordered regions lie at residues 231–254 (RGDL…RNSL), 266–325 (IHPS…TRSS), and 590–725 (MLRD…HQTP). 2 stretches are compositionally biased toward low complexity: residues 269–283 (SAST…RLST) and 610–619 (NQKQQPNQQN). Polar residues-rich tracts occupy residues 620-630 (ISQKFLSQRSA) and 637-648 (IQLSVKPQTTAI). The span at 664 to 676 (SSTSTSFSAVRSS) shows a compositional bias: low complexity. Residues 677–690 (GYGQNQSTTPNRAK) are compositionally biased toward polar residues. Positions 704–721 (TNGNNNNKSSSSSPSTST) are enriched in low complexity. Residues 740 to 767 (ASLTQEQANCLQNAMNTAKDEMSKNNED) are a coiled coil. Over residues 775–784 (IRKTPPKEVP) the composition is skewed to basic and acidic residues. Residues 775-823 (IRKTPPKEVPRSYNNSPFKPSNLDSSVHRSYNNNSPFRPSSGSVGSGSN) are disordered. Residues 786–812 (SYNNSPFKPSNLDSSVHRSYNNNSPFR) are compositionally biased toward polar residues. The HEAT 2 repeat unit spans residues 1305–1341 (HLIVNDVAPCFVTAYESMSSTVRKCAVFGLVALVQRV).

It belongs to the CLASP family.

It localises to the cytoplasm. The protein localises to the cytoskeleton. Functionally, microtubule plus-end tracking protein that promotes the stabilization of dynamic microtubules. Operates redundantly with cls-2 and cls-3 in regulating microtubule processes which position the spindle during asymmetric cell division. This Caenorhabditis elegans protein is Protein CLASP-1 (cls-1).